The following is a 206-amino-acid chain: Large ribosomal subunit protein uL4 (206 aa).

The protein belongs to the universal ribosomal protein uL4 family. As to quaternary structure, part of the 50S ribosomal subunit.

Its function is as follows. One of the primary rRNA binding proteins, this protein initially binds near the 5'-end of the 23S rRNA. It is important during the early stages of 50S assembly. It makes multiple contacts with different domains of the 23S rRNA in the assembled 50S subunit and ribosome. Functionally, forms part of the polypeptide exit tunnel. This Cereibacter sphaeroides (strain KD131 / KCTC 12085) (Rhodobacter sphaeroides) protein is Large ribosomal subunit protein uL4.